The sequence spans 93 residues: C-C motif chemokine 3 (93 aa).

Residues 1–24 (MKVAVAALAVLLCAMALCSQVFSA) form the signal peptide. Intrachain disulfides connect Cys-34–Cys-58 and Cys-35–Cys-74.

Belongs to the intercrine beta (chemokine CC) family. In terms of assembly, self-associates. Also heterodimer of MIP-1-alpha(4-69) and MIP-1-beta(3-69). Interacts with CCR1.

The protein resides in the secreted. In terms of biological role, monokine with inflammatory and chemokinetic properties. Binds to CCR1, CCR4 and CCR5. One of the major HIV-suppressive factors produced by CD8+ T-cells. Recombinant MIP-1-alpha induces a dose-dependent inhibition of different strains of HIV-1, HIV-2, and simian immunodeficiency virus (SIV). This Bos taurus (Bovine) protein is C-C motif chemokine 3 (CCL3).